We begin with the raw amino-acid sequence, 325 residues long: Tagatose 1,6-diphosphate aldolase 1 (325 aa).

It belongs to the aldolase LacD family.

It carries out the reaction D-tagatofuranose 1,6-bisphosphate = D-glyceraldehyde 3-phosphate + dihydroxyacetone phosphate. It participates in carbohydrate metabolism; D-tagatose 6-phosphate degradation; D-glyceraldehyde 3-phosphate and glycerone phosphate from D-tagatose 6-phosphate: step 2/2. This is Tagatose 1,6-diphosphate aldolase 1 from Streptococcus agalactiae serotype III (strain NEM316).